A 508-amino-acid polypeptide reads, in one-letter code: uncharacterized protein (508 aa).

12 helical membrane-spanning segments follow: residues 65-87, 104-124, 136-156, 160-180, 192-212, 224-244, 292-312, 333-353, 357-377, 384-404, 416-436, and 450-470; these read IFPVMCLVYCIQFLDKTSNSYAV, WSGTAFYLGYLVFEFPASLLL, FLVIWGFLLCMTSVANYPGFI, VLLGMMESAASPGFILLTAQW, VWVAFNGLGQILGSCMAYGLA, LIFIICGVLAIFLGFVILAVV, TWIMFVSSVLLNIPNGGIGTF, LPAGACEFGGLIAFGFLSLFI, MVLATITTCIALIGSCLLSFA, LAGYYLLMVSPGAMIVMFAII, TVGVIYLIGYCVGNLIGPQTF, and TMVGCYAATLVTFPALYYVNW.

The protein belongs to the major facilitator superfamily. Allantoate permease family.

The protein resides in the endoplasmic reticulum. The protein localises to the golgi apparatus. It is found in the membrane. This is an uncharacterized protein from Schizosaccharomyces pombe (strain 972 / ATCC 24843) (Fission yeast).